An 841-amino-acid polypeptide reads, in one-letter code: Translation initiation factor IF-2 (841 aa).

Positions 341-508 (NRAPVVTIMG…AILLQAEILE (168 aa)) constitute a tr-type G domain. The interval 350 to 357 (GHVDHGKT) is G1. A GTP-binding site is contributed by 350-357 (GHVDHGKT). A G2 region spans residues 375-379 (GITQC). The tract at residues 396-399 (DTPG) is G3. GTP is bound by residues 396 to 400 (DTPGH) and 450 to 453 (NKID). Residues 450–453 (NKID) form a G4 region. The segment at 486–488 (SAK) is G5.

This sequence belongs to the TRAFAC class translation factor GTPase superfamily. Classic translation factor GTPase family. IF-2 subfamily.

The protein localises to the cytoplasm. In terms of biological role, one of the essential components for the initiation of protein synthesis. Protects formylmethionyl-tRNA from spontaneous hydrolysis and promotes its binding to the 30S ribosomal subunits. Also involved in the hydrolysis of GTP during the formation of the 70S ribosomal complex. This is Translation initiation factor IF-2 from Wigglesworthia glossinidia brevipalpis.